Consider the following 336-residue polypeptide: F420-dependent glucose-6-phosphate dehydrogenase (336 aa).

Aspartate 39 provides a ligand contact to coenzyme F420-(gamma-Glu)n. Histidine 40 functions as the Proton donor in the catalytic mechanism. Residues threonine 76 and 107–108 contribute to the coenzyme F420-(gamma-Glu)n site; that span reads TG. Glutamate 109 (proton acceptor) is an active-site residue. Residues asparagine 112, 177–178, and 180–181 each bind coenzyme F420-(gamma-Glu)n; these read GG and VV. Threonine 195, lysine 198, lysine 259, and arginine 283 together coordinate substrate.

It belongs to the F420-dependent glucose-6-phosphate dehydrogenase family. Homodimer.

It catalyses the reaction oxidized coenzyme F420-(gamma-L-Glu)(n) + D-glucose 6-phosphate + H(+) = 6-phospho-D-glucono-1,5-lactone + reduced coenzyme F420-(gamma-L-Glu)(n). In terms of biological role, catalyzes the coenzyme F420-dependent oxidation of glucose 6-phosphate (G6P) to 6-phosphogluconolactone. Appears to have a role in resistance to oxidative stress, via its consumption of G6P that serves as a source of reducing power to combat oxidative stress in mycobacteria. This is F420-dependent glucose-6-phosphate dehydrogenase from Mycolicibacterium fortuitum (Mycobacterium fortuitum).